The primary structure comprises 363 residues: Putative agmatine deiminase (363 aa).

Polar residues predominate over residues 1–10; that stretch reads MTKQLSTSPK. A disordered region spans residues 1–20; sequence MTKQLSTSPKQDGFRMPAEH. The active-site Amidino-cysteine intermediate is the Cys355.

Belongs to the agmatine deiminase family.

The enzyme catalyses agmatine + H2O = N-carbamoylputrescine + NH4(+). The sequence is that of Putative agmatine deiminase from Photobacterium profundum (strain SS9).